Here is a 216-residue protein sequence, read N- to C-terminus: Uracil phosphoribosyltransferase (216 aa).

5-phospho-alpha-D-ribose 1-diphosphate-binding positions include arginine 85, arginine 110, and 135–143; that span reads DPMVATGYS. Uracil-binding positions include isoleucine 200 and 205-207; that span reads GDA. Aspartate 206 provides a ligand contact to 5-phospho-alpha-D-ribose 1-diphosphate.

The protein belongs to the UPRTase family. Mg(2+) is required as a cofactor.

It carries out the reaction UMP + diphosphate = 5-phospho-alpha-D-ribose 1-diphosphate + uracil. The protein operates within pyrimidine metabolism; UMP biosynthesis via salvage pathway; UMP from uracil: step 1/1. With respect to regulation, allosterically activated by GTP. Functionally, catalyzes the conversion of uracil and 5-phospho-alpha-D-ribose 1-diphosphate (PRPP) to UMP and diphosphate. The polypeptide is Uracil phosphoribosyltransferase (Burkholderia mallei (strain NCTC 10247)).